The primary structure comprises 173 residues: Membrane protein PM19L (173 aa).

4 helical membrane passes run 9 to 29 (IAPLLVLNLIMYLIVIGFASW), 43 to 63 (GVAGNGATFYFLVFAILAGVV), 83 to 103 (LAAGAASALIAWAITALAFGL), and 124 to 144 (FVIILAFTQLLYVAMLHGGLF).

As to expression, expressed in roots, leaf blades, leaf sheaths, stems, spikelets and embryos.

It is found in the membrane. Its function is as follows. May be involved in abiotic stress response through abscisic acid-dependent signaling. The chain is Membrane protein PM19L from Oryza sativa subsp. japonica (Rice).